Reading from the N-terminus, the 269-residue chain is 4-hydroxy-tetrahydrodipicolinate reductase (269 aa).

NAD(+) is bound by residues 11-16 (GASGRM) and glutamate 37. An NADP(+)-binding site is contributed by arginine 38. Residues 101 to 103 (GTT) and 125 to 128 (AGNM) each bind NAD(+). Histidine 158 acts as the Proton donor/acceptor in catalysis. Histidine 159 is a (S)-2,3,4,5-tetrahydrodipicolinate binding site. Lysine 162 acts as the Proton donor in catalysis. Position 168–169 (168–169 (GT)) interacts with (S)-2,3,4,5-tetrahydrodipicolinate.

Belongs to the DapB family.

It is found in the cytoplasm. The catalysed reaction is (S)-2,3,4,5-tetrahydrodipicolinate + NAD(+) + H2O = (2S,4S)-4-hydroxy-2,3,4,5-tetrahydrodipicolinate + NADH + H(+). The enzyme catalyses (S)-2,3,4,5-tetrahydrodipicolinate + NADP(+) + H2O = (2S,4S)-4-hydroxy-2,3,4,5-tetrahydrodipicolinate + NADPH + H(+). Its pathway is amino-acid biosynthesis; L-lysine biosynthesis via DAP pathway; (S)-tetrahydrodipicolinate from L-aspartate: step 4/4. Catalyzes the conversion of 4-hydroxy-tetrahydrodipicolinate (HTPA) to tetrahydrodipicolinate. This chain is 4-hydroxy-tetrahydrodipicolinate reductase, found in Cereibacter sphaeroides (strain ATCC 17029 / ATH 2.4.9) (Rhodobacter sphaeroides).